We begin with the raw amino-acid sequence, 393 residues long: MSNPSIVIASAARTAVGSFNGAFGNTLAHELGAAAIKAVLERAGVEAGEVDEVILGQVLPAGEGQNPARQAAMKAGLPQEKTAWGMNQLCGSGLRAVALGMQQIATGDAKVIVAGGMESMSMAPHCAHLRGGVKMGDYKMIDTMIKDGLTDAFYGYHMGITAENVARKWQLTREEQDEFALASQNKAEAAQKAGRFADEIVPFVVKTRKGDVNVDQDEYIRHGATLDSIAKLRPAFDKEGTVTAGNASGLNDGAAAALLMTEAEAARRGIQPLARIVSWATAGVDPQIMGTGPIPASRKALEKAGWSVADIELVEANEAFAAQACAVNKDLGWDPSIVNVNGGAIAIGHPIGASGARVLNTLLFEMKRRGVSKGLATLCIGGGMGVAMCVERL.

The active-site Acyl-thioester intermediate is the C90. Residues H349 and C379 each act as proton acceptor in the active site.

This sequence belongs to the thiolase-like superfamily. Thiolase family. In terms of assembly, homotetramer.

Its subcellular location is the cytoplasm. It carries out the reaction 2 acetyl-CoA = acetoacetyl-CoA + CoA. It functions in the pathway biopolymer metabolism; poly-(R)-3-hydroxybutanoate biosynthesis. It participates in metabolic intermediate biosynthesis; (R)-mevalonate biosynthesis; (R)-mevalonate from acetyl-CoA: step 1/3. The protein is Acetyl-CoA acetyltransferase of Rhizobium meliloti (strain 1021) (Ensifer meliloti).